Reading from the N-terminus, the 340-residue chain is UPF0324 membrane protein BC_5174 (340 aa).

10 consecutive transmembrane segments (helical) span residues 13 to 35 (FGFS…LAEL), 40 to 59 (IMGQ…AAIG), 99 to 118 (VLVI…YGLT), 128 to 150 (GILT…APQV), 157 to 179 (TAVG…TLLY), 189 to 211 (YGVF…APGG), 218 to 240 (AVIV…GLWF), 255 to 277 (LPIP…GIIP), 279 to 301 (VVAG…GLGL), and 316 to 338 (FVAG…YALG).

The protein belongs to the UPF0324 family.

It localises to the cell membrane. The polypeptide is UPF0324 membrane protein BC_5174 (Bacillus cereus (strain ATCC 14579 / DSM 31 / CCUG 7414 / JCM 2152 / NBRC 15305 / NCIMB 9373 / NCTC 2599 / NRRL B-3711)).